Consider the following 857-residue polypeptide: Autoinducer 2 sensor kinase/phosphatase LuxQ (857 aa).

The next 2 helical transmembrane spans lie at 20–40 and 283–303; these read IIFLVLGLITIGIFIQSYYFS and LGLATSVVLMLMLSLAIRSWI. Residues 490-712 enclose the Histidine kinase domain; that stretch reads KMSHEIRTPL…TFYLSIPVEK (223 aa). Residue H493 is modified to Phosphohistidine; by autocatalysis. The region spanning 735–850 is the Response regulatory domain; the sequence is KVLLVEDNHT…ELHDELLHFK (116 aa). 4-aspartylphosphate is present on D784.

In terms of assembly, binds the complex formed by the autoinducer and LuxP.

The protein localises to the cell inner membrane. It carries out the reaction ATP + protein L-histidine = ADP + protein N-phospho-L-histidine.. Its function is as follows. At low cell density, in absence of autoinducer has a kinase activity, and autophosphorylates on a histidine residue. The phosphoryl group is then transferred to an aspartate residue in the response regulator domain. The phosphoryl group is transferred to LuxU, and ultimately to LuxO. At high cell density, in the presence of autoinducer, the kinase activity is inactivated, and the response regulator domain has a phosphatase activity. This is Autoinducer 2 sensor kinase/phosphatase LuxQ (luxQ) from Vibrio vulnificus (strain YJ016).